The following is a 266-amino-acid chain: Glutamate racemase (266 aa).

Residues 9–10 (DS) and 41–42 (YG) contribute to the substrate site. The active-site Proton donor/acceptor is cysteine 72. 73 to 74 (NT) is a substrate binding site. Cysteine 184 functions as the Proton donor/acceptor in the catalytic mechanism. 185 to 186 (TH) contacts substrate.

Belongs to the aspartate/glutamate racemases family.

It carries out the reaction L-glutamate = D-glutamate. It participates in cell wall biogenesis; peptidoglycan biosynthesis. Functionally, provides the (R)-glutamate required for cell wall biosynthesis. The chain is Glutamate racemase from Staphylococcus haemolyticus (strain JCSC1435).